Reading from the N-terminus, the 1994-residue chain is Protein-methionine sulfoxide oxidase mical3a (1994 aa).

Residues 2–498 (GDGGVNAVGE…RHLLDTGETR (497 aa)) are monooxygenase domain. Residues Cys-101, 101 to 129 (CGLR…SRNN), Glu-120, Arg-122, Arg-127, Asn-129, and Asp-402 contribute to the FAD site. One can recognise a Calponin-homology (CH) domain in the interval 521–627 (IVRSSKLLNW…YLSQFYEMFK (107 aa)). The segment at 666–708 (ISRKRNPKDKKEKELDGLGKRRKTSQAGQSEDEELQRANRDDR) is disordered. A compositionally biased stretch (basic and acidic residues) spans 674–684 (DKKEKELDGLG). The LIM zinc-binding domain maps to 772–834 (DVCFFCRKRV…KPHYCYRLSG (63 aa)). Disordered regions lie at residues 843–900 (PAAA…LKGT), 917–1064 (EELE…AEAR), 1176–1263 (SQPV…ELKK), 1281–1476 (LGLT…REEV), 1493–1555 (VEDT…SPEA), and 1598–1747 (KVAW…LRLR). Acidic residues-rich tracts occupy residues 917–926 (EELEEVPEET) and 951–961 (SDMEEEDEDAE). The segment covering 975–987 (EAVELHAKLKGES) has biased composition (basic and acidic residues). Acidic residues-rich tracts occupy residues 1001-1037 (GEMD…DPEA) and 1046-1060 (PGTE…SDAE). A compositionally biased stretch (polar residues) spans 1200-1215 (PTGNPLSPICTQSQPC). Composition is skewed to basic and acidic residues over residues 1249-1263 (RTNE…ELKK) and 1287-1297 (ERSKTAVEKSI). Composition is skewed to low complexity over residues 1299 to 1314 (KTPT…YTPE) and 1358 to 1368 (SSSSGLGLNGS). Residues 1369–1389 (VTTSQTAASDSYNNSDSTMLT) show a composition bias toward polar residues. Pro residues predominate over residues 1437 to 1458 (PVSPPQPKQKPVTAPVPTPRTN). The segment covering 1464-1476 (RVKEPNKPRREEV) has biased composition (basic and acidic residues). The span at 1616 to 1635 (AQKDSAVKALESKKQADTLP) shows a compositional bias: basic and acidic residues. A compositionally biased stretch (low complexity) spans 1649-1660 (SSVTSSESSTGG). The span at 1661 to 1679 (KSKKRSSLFSPRKNKKEKK) shows a compositional bias: basic residues. The span at 1680 to 1693 (AKNERLSSTEETPP) shows a compositional bias: basic and acidic residues. A compositionally biased stretch (low complexity) spans 1718 to 1729 (CPSTPSSSTTGD). Residues 1730–1746 (SGKKKDSPLDRSSDLRL) are compositionally biased toward basic and acidic residues. Coiled coils occupy residues 1796–1855 (EEEL…KALR) and 1894–1960 (QEKN…EQRD). Residues 1816-1982 (KQEELKRLHR…EKEEDKDLEA (167 aa)) enclose the bMERB domain.

It belongs to the Mical family. The cofactor is FAD.

The protein resides in the cytoplasm. Its subcellular location is the cytoskeleton. It is found in the nucleus. It catalyses the reaction L-methionyl-[F-actin] + NADPH + O2 + H(+) = L-methionyl-(R)-S-oxide-[F-actin] + NADP(+) + H2O. Functionally, monooxygenase that promotes depolymerization of F-actin by mediating oxidation of specific methionine residues on actin. Acts by modifying actin subunits through the addition of oxygen to form methionine-sulfoxide, leading to promote actin filament severing and prevent repolymerization. Involved in exocytic vesicles tethering and fusion: the monooxygenase activity is required for this process. This chain is Protein-methionine sulfoxide oxidase mical3a (mical3a), found in Danio rerio (Zebrafish).